The following is a 178-amino-acid chain: MAELLTLARPYAKAAFAYASEQGATDNWSNALQVLSAAVQDEAFSAYLNRPEHTPAEQVKLFAKVLGEDQSQAVSNFLTLLADNDRLVLLPEIAAEYEQLKSQNNNNVDVVIESAFPLTAEQEQLLKSALEKRFNSTVTVSVEVKPELIAGVVIRAGDQVIDDSALNKLEKMRTRLLA.

It belongs to the ATPase delta chain family. F-type ATPases have 2 components, F(1) - the catalytic core - and F(0) - the membrane proton channel. F(1) has five subunits: alpha(3), beta(3), gamma(1), delta(1), epsilon(1). F(0) has three main subunits: a(1), b(2) and c(10-14). The alpha and beta chains form an alternating ring which encloses part of the gamma chain. F(1) is attached to F(0) by a central stalk formed by the gamma and epsilon chains, while a peripheral stalk is formed by the delta and b chains.

It localises to the cell inner membrane. Functionally, f(1)F(0) ATP synthase produces ATP from ADP in the presence of a proton or sodium gradient. F-type ATPases consist of two structural domains, F(1) containing the extramembraneous catalytic core and F(0) containing the membrane proton channel, linked together by a central stalk and a peripheral stalk. During catalysis, ATP synthesis in the catalytic domain of F(1) is coupled via a rotary mechanism of the central stalk subunits to proton translocation. In terms of biological role, this protein is part of the stalk that links CF(0) to CF(1). It either transmits conformational changes from CF(0) to CF(1) or is implicated in proton conduction. The sequence is that of ATP synthase subunit delta from Acinetobacter baumannii (strain SDF).